Reading from the N-terminus, the 133-residue chain is Small ribosomal subunit protein uS8 (133 aa).

This sequence belongs to the universal ribosomal protein uS8 family. Part of the 30S ribosomal subunit. Contacts proteins S5 and S12.

In terms of biological role, one of the primary rRNA binding proteins, it binds directly to 16S rRNA central domain where it helps coordinate assembly of the platform of the 30S subunit. The sequence is that of Small ribosomal subunit protein uS8 from Chlamydia trachomatis serovar L2b (strain UCH-1/proctitis).